We begin with the raw amino-acid sequence, 330 residues long: ADP-L-glycero-D-manno-heptose-6-epimerase (330 aa).

NADP(+) is bound by residues 11-12 (FI), 32-33 (DN), lysine 39, lysine 54, 75-79 (EGACS), and asparagine 92. The Proton acceptor role is filled by tyrosine 139. Lysine 143 serves as a coordination point for NADP(+). Asparagine 168 is a binding site for substrate. Residues valine 169 and lysine 177 each coordinate NADP(+). Lysine 177 acts as the Proton acceptor in catalysis. Substrate contacts are provided by residues arginine 179, histidine 186, 200–203 (FGEY), arginine 213, and tyrosine 292.

It belongs to the NAD(P)-dependent epimerase/dehydratase family. HldD subfamily. As to quaternary structure, homopentamer. NADP(+) serves as cofactor.

The catalysed reaction is ADP-D-glycero-beta-D-manno-heptose = ADP-L-glycero-beta-D-manno-heptose. It functions in the pathway nucleotide-sugar biosynthesis; ADP-L-glycero-beta-D-manno-heptose biosynthesis; ADP-L-glycero-beta-D-manno-heptose from D-glycero-beta-D-manno-heptose 7-phosphate: step 4/4. Functionally, catalyzes the interconversion between ADP-D-glycero-beta-D-manno-heptose and ADP-L-glycero-beta-D-manno-heptose via an epimerization at carbon 6 of the heptose. This is ADP-L-glycero-D-manno-heptose-6-epimerase from Burkholderia mallei (strain NCTC 10247).